A 461-amino-acid chain; its full sequence is Serine/threonine-protein kinase VHS1 (461 aa).

The 326-residue stretch at 12–337 (YLITSQIGEG…KEVSSITSFT (326 aa)) folds into the Protein kinase domain. ATP-binding positions include 18–26 (IGEGAYGLV) and K41. D185 (proton acceptor) is an active-site residue. Residues 384–433 (LSYTSSSEEEDGIKEGIDDDNGSRSGSFGTLDTDTGLHSSFTSTSCESDN) form a disordered region. The span at 390–403 (SEEEDGIKEGIDDD) shows a compositional bias: acidic residues. Residues 406–433 (SRSGSFGTLDTDTGLHSSFTSTSCESDN) show a composition bias toward polar residues.

The protein belongs to the protein kinase superfamily. Ser/Thr protein kinase family.

Its subcellular location is the cytoplasm. It carries out the reaction L-seryl-[protein] + ATP = O-phospho-L-seryl-[protein] + ADP + H(+). The enzyme catalyses L-threonyl-[protein] + ATP = O-phospho-L-threonyl-[protein] + ADP + H(+). Functionally, probable serine/threonine protein kinase involved in the G1-S transition. This is Serine/threonine-protein kinase VHS1 (VHS1) from Saccharomyces cerevisiae (strain ATCC 204508 / S288c) (Baker's yeast).